The following is an 83-amino-acid chain: Exodeoxyribonuclease 7 small subunit (83 aa).

The tract at residues 63–83 is disordered; it reads VQNDDGTTGTEPLADTGESGR.

It belongs to the XseB family. Heterooligomer composed of large and small subunits.

The protein localises to the cytoplasm. It catalyses the reaction Exonucleolytic cleavage in either 5'- to 3'- or 3'- to 5'-direction to yield nucleoside 5'-phosphates.. In terms of biological role, bidirectionally degrades single-stranded DNA into large acid-insoluble oligonucleotides, which are then degraded further into small acid-soluble oligonucleotides. The protein is Exodeoxyribonuclease 7 small subunit of Gluconobacter oxydans (strain 621H) (Gluconobacter suboxydans).